A 298-amino-acid polypeptide reads, in one-letter code: Mitochondrial dicarboxylate/tricarboxylate transporter DTC (298 aa).

Solcar repeat units lie at residues 12–93 (WTTV…LTAK), 103–194 (LPLY…SAEY), and 202–292 (GEMS…ITKF). Transmembrane regions (helical) follow at residues 18–38 (FVNGGASGMLATCVIQPIDMI), 68–88 (GLSAGLLRQATYTTARLGSFK), 109–129 (ALCGLTAGAIGACVGSPADLA), 169–189 (GCGPTVVRAMALNMGMLASYD), 208–228 (VGASAVSGFCAAACSLPFDFV), and 268–288 (FPVYCVRIAPHVMMTWIFLNQ).

This sequence belongs to the mitochondrial carrier (TC 2.A.29) family. Highly expressed in flower buds and at lower levels in roots, leaves and stems.

It localises to the mitochondrion inner membrane. In terms of biological role, catalyzes the transport of dicarboxylates, such as oxoglutarate, oxaloacetate, malate, and succinate, and of tricarboxylates, such as citrate, isocitrate, cis-aconitate, and trans-aconitate by a counter-exchange mechanism across the inner mitochondrial membrane. Substrate preference in reconstituted proteoliposomes is oxaloacetate &gt; malonate &gt; malate &gt; maleate &gt; succinate &gt; oxoglutarate &gt; citrate &gt; trans-aconitate &gt; cis-aconitate &gt; sulfate &gt; isocitrate. May be important for plant metabolic functions requiring organic acid flux to or from the mitochondria, such as nitrogen assimilation, export of reducing equivalents from the mitochondria, and fatty acid elongation. The polypeptide is Mitochondrial dicarboxylate/tricarboxylate transporter DTC (DTC) (Arabidopsis thaliana (Mouse-ear cress)).